The following is a 388-amino-acid chain: Probable proton-coupled zinc antiporter SLC30A3 (388 aa).

Over residues 1-13 the composition is skewed to polar residues; the sequence is MEPSPTTGGSETT. 2 disordered regions span residues 1–30 and 35–54; these read MEPS…GLRL and TEAP…SFHH. The Cytoplasmic portion of the chain corresponds to 1–75; the sequence is MEPSPTTGGS…TPERMQAQRQ (75 aa). A helical membrane pass occupies residues 76–96; the sequence is LCTACAVCCVFMAGEVVGGYL. Topologically, residues 97-105 are lumenal; that stretch reads AHSLAIMTD. A helical membrane pass occupies residues 106–126; that stretch reads AAHLLADVGSMMGSLFSLWLS. Residues His-108 and Asp-112 each contribute to the Zn(2+) site. Residues 127–145 lie on the Cytoplasmic side of the membrane; that stretch reads TRPATRTMTFGWHRSETLG. The helical transmembrane segment at 146–166 threads the bilayer; the sequence is ALASVVSLWMVTGILLYLAFI. At 167–177 the chain is on the lumenal side; that stretch reads RLLHSDYHIEG. A helical membrane pass occupies residues 178-198; it reads GAMLLTASIAVCANLLMAFVL. Residues 199 to 235 are Cytoplasmic-facing; sequence HQAGPPHSHGSRGAEYAPLEEGSGEPLPLGNTSVRAA. A helical transmembrane segment spans residues 236–256; it reads FVHVLGDLLQSLGVLIASILI. Zn(2+) is bound by residues His-238 and Asp-242. At 257-264 the chain is on the lumenal side; sequence YFKPQYKA. The chain crosses the membrane as a helical span at residues 265 to 285; that stretch reads ADPISTFLFSICALGSTAPTL. The Cytoplasmic portion of the chain corresponds to 286–388; that stretch reads RDVLRVLMEG…CLRCQEPPQA (103 aa).

Belongs to the cation diffusion facilitator (CDF) transporter (TC 2.A.4) family. SLC30A subfamily. In terms of assembly, homodimer. Homodimerization could regulate efficiency of zinc transport. Interacts with TMEM163.

The protein resides in the cytoplasmic vesicle. It localises to the secretory vesicle. The protein localises to the synaptic vesicle membrane. Its subcellular location is the synapse. It is found in the synaptosome. The protein resides in the late endosome membrane. It localises to the lysosome membrane. It carries out the reaction Zn(2+)(in) + 2 H(+)(out) = Zn(2+)(out) + 2 H(+)(in). In terms of biological role, probable proton-coupled zinc ion antiporter mediating the import of zinc from cytoplasm into synaptic vesicles and participating to cellular zinc ion homeostasis in the brain. The polypeptide is Probable proton-coupled zinc antiporter SLC30A3 (Bos taurus (Bovine)).